The primary structure comprises 378 residues: Coiled-coil domain-containing protein 74A (378 aa).

3 disordered regions span residues 1-52, 128-211, and 301-328; these read MSGA…RNLD, GGPS…EEPL, and EGSQRPQAAPEEASFPRDQEATHFPKVS. The segment covering 34–44 has biased composition (polar residues); sequence LRPQSPQLRQS. The stretch at 47–90 forms a coiled coil; that stretch reads QKRNLDLEKSLQFLQQQHSEMLAKLHEEIEHLKRENKDLHYKLI. The span at 141–151 shows a compositional bias: basic residues; it reads RTHRPGGKRGR. Positions 165–182 are enriched in polar residues; it reads DSLSMSSFQSVKSISNSG. Basic and acidic residues-rich tracts occupy residues 194 to 205 and 314 to 323; these read QDSKADVSQKAD and SFPRDQEATH.

This chain is Coiled-coil domain-containing protein 74A (CCDC74A), found in Homo sapiens (Human).